Reading from the N-terminus, the 127-residue chain is uncharacterized protein (127 aa).

This is an uncharacterized protein from Acanthamoeba polyphaga (Amoeba).